Consider the following 400-residue polypeptide: MTQYASPLLQTLLDTDAYKLHMQQAVFHHYYDVHVAAEFRCRGDDLLGIYADAIREQVDAMQHLALSDAEYQWLSGLPFFKSDYLQWLKTFRYDPTQVQIRNDGGKLDIRLSGPWREVIMWEVPLLAVISELVHRYRSPEASVDQALAHLEVKLDDFRTMTDGLDLSAFRLMDFGTRRRFSRDVQQAIVERLKLEPWFIGTSNYDLARRLSLTPMGTQAHEWFQAHQQISPDLANSQIAALQAWLDEYPDMLGIALTDCITMDAFLRDFGPEFAGRYQGLRHDSGDPVQWGEKAIAHYQQLGIDPLSKTLIFSDNLDFAKAIELYRHFADRVKLGFGIGTRLTCDIPHVKPLNIVIKLVECNGRPVAKLSDSPGKTICHDKAFVRALRKAFDLPQVRKAS.

Residue histidine 220 is modified to Phosphohistidine; by autocatalysis.

Belongs to the NAPRTase family. Post-translationally, transiently phosphorylated on a His residue during the reaction cycle. Phosphorylation strongly increases the affinity for substrates and increases the rate of nicotinate D-ribonucleotide production. Dephosphorylation regenerates the low-affinity form of the enzyme, leading to product release.

It catalyses the reaction nicotinate + 5-phospho-alpha-D-ribose 1-diphosphate + ATP + H2O = nicotinate beta-D-ribonucleotide + ADP + phosphate + diphosphate. It functions in the pathway cofactor biosynthesis; NAD(+) biosynthesis; nicotinate D-ribonucleotide from nicotinate: step 1/1. Catalyzes the synthesis of beta-nicotinate D-ribonucleotide from nicotinate and 5-phospho-D-ribose 1-phosphate at the expense of ATP. This chain is Nicotinate phosphoribosyltransferase, found in Cronobacter sakazakii (strain ATCC BAA-894) (Enterobacter sakazakii).